We begin with the raw amino-acid sequence, 486 residues long: Cardiolipin synthase A (486 aa).

Transmembrane regions (helical) follow at residues 3 to 23 (TFYT…IAGV) and 38 to 58 (MAWL…YLSF). 2 PLD phosphodiesterase domains span residues 219-246 (MDLR…VDPR) and 399-426 (EGGL…DMRS). Residues histidine 224, lysine 226, aspartate 231, histidine 404, lysine 406, and aspartate 411 contribute to the active site.

Belongs to the phospholipase D family. Cardiolipin synthase subfamily. ClsA sub-subfamily.

It is found in the cell inner membrane. The enzyme catalyses 2 a 1,2-diacyl-sn-glycero-3-phospho-(1'-sn-glycerol) = a cardiolipin + glycerol. Its function is as follows. Catalyzes the reversible phosphatidyl group transfer from one phosphatidylglycerol molecule to another to form cardiolipin (CL) (diphosphatidylglycerol) and glycerol. The sequence is that of Cardiolipin synthase A from Yersinia pseudotuberculosis serotype O:1b (strain IP 31758).